Here is a 262-residue protein sequence, read N- to C-terminus: Hydroxyethylthiazole kinase (262 aa).

Residue M50 participates in substrate binding. Residues R125 and T171 each contribute to the ATP site. Substrate is bound at residue G198.

This sequence belongs to the Thz kinase family. Requires Mg(2+) as cofactor.

The catalysed reaction is 5-(2-hydroxyethyl)-4-methylthiazole + ATP = 4-methyl-5-(2-phosphooxyethyl)-thiazole + ADP + H(+). It participates in cofactor biosynthesis; thiamine diphosphate biosynthesis; 4-methyl-5-(2-phosphoethyl)-thiazole from 5-(2-hydroxyethyl)-4-methylthiazole: step 1/1. Functionally, catalyzes the phosphorylation of the hydroxyl group of 4-methyl-5-beta-hydroxyethylthiazole (THZ). The chain is Hydroxyethylthiazole kinase from Escherichia coli O17:K52:H18 (strain UMN026 / ExPEC).